Reading from the N-terminus, the 378-residue chain is Ferredoxin--NADP reductase, root isozyme 1, chloroplastic (378 aa).

A chloroplast-targeting transit peptide spans 1-65 (MALSTTPSQM…KRSTICMSLQ (65 aa)). The FAD-binding FR-type domain maps to 93–221 (KEPYTATIVS…TGPSGKVMLL (129 aa)). Residues C196 and C201 are joined by a disulfide bond. Position 197 is a phosphoserine (S197). The residue at position 229 (T229) is a Phosphothreonine. An NADP(+)-binding site is contributed by 231–249 (IMIATGTGVAPYRGYLRRM). The stretch at 349–373 (LKRVAEERGESWEQKLTQLRKNKQW) forms a coiled coil.

Belongs to the ferredoxin--NADP reductase type 1 family. The cofactor is FAD. Expressed in shoots and roots. Less abundant in roots than RFNR2.

It localises to the plastid. It is found in the chloroplast. It catalyses the reaction 2 reduced [2Fe-2S]-[ferredoxin] + NADP(+) + H(+) = 2 oxidized [2Fe-2S]-[ferredoxin] + NADPH. Functionally, maintains the supply of reduced ferredoxin under non-photosynthetic conditions. This Arabidopsis thaliana (Mouse-ear cress) protein is Ferredoxin--NADP reductase, root isozyme 1, chloroplastic (RFNR1).